Here is a 268-residue protein sequence, read N- to C-terminus: Fibroblast growth factor 5 (268 aa).

A signal peptide spans 1 to 20 (MSLSFLLLLFFSHLILSAWA). Residues 26–81 (LAPKGQPGPAATDRNPRGSSSRQSSSSAMSSSSASSSPAASLGSQGSGLEQSSFQW) form a disordered region. Low complexity predominate over residues 43–80 (GSSSRQSSSSAMSSSSASSSPAASLGSQGSGLEQSSFQ). An N-linked (GlcNAc...) asparagine glycan is attached at asparagine 110. The tract at residues 233–255 (VPEKKKPPSPIKPKIPLSAPRKN) is disordered.

This sequence belongs to the heparin-binding growth factors family. As to quaternary structure, interacts with FGFR1 and FGFR2. Affinity between fibroblast growth factors (FGFs) and their receptors is increased by heparan sulfate glycosaminoglycans that function as coreceptors. In terms of tissue distribution, expressed in neonatal brain.

The protein localises to the secreted. Its function is as follows. Plays an important role in the regulation of cell proliferation and cell differentiation. Required for normal regulation of the hair growth cycle. Functions as an inhibitor of hair elongation by promoting progression from anagen, the growth phase of the hair follicle, into catagen the apoptosis-induced regression phase. The protein is Fibroblast growth factor 5 (FGF5) of Homo sapiens (Human).